A 1865-amino-acid chain; its full sequence is Endoribonuclease Dicer (1865 aa).

Residues 41–213 form the Helicase ATP-binding domain; the sequence is LLEAALEHNT…DLEEKIQNLE (173 aa). Residue 54 to 61 participates in ATP binding; sequence LNTGSGKT. A DECH box motif is present at residues 161–164; sequence DECH. Positions 397 to 417 are disordered; sequence SWSDSEDDDEDEEAEAKEKTE. Positions 400-411 are enriched in acidic residues; that stretch reads DSEDDDEDEEAE. Positions 419 to 588 constitute a Helicase C-terminal domain; that stretch reads NFPSPFTNIL…SAECNDFELE (170 aa). The Dicer dsRNA-binding fold domain maps to 616–708; sequence AIGHVNRYCA…MPVGKETVKY (93 aa). The disordered stretch occupies residues 713–732; sequence DLHDEEETSVPGRPGSTKRR. A PAZ domain is found at 881–1028; the sequence is KFMEDIEKSE…LVPELCAIHP (148 aa). Composition is skewed to polar residues over residues 1111–1128 and 1192–1201; these read GTSS…SMEV and STQTTTSVSV. 2 disordered regions span residues 1111–1142 and 1190–1259; these read GTSS…PDEK and DLST…DCRS. Low complexity predominate over residues 1240 to 1252; that stretch reads SETATSTPAPSET. In terms of domain architecture, RNase III 1 spans 1262-1385; that stretch reads AGPAWDSPKT…TDKWDSDENK (124 aa). Mg(2+)-binding residues include Glu-1298, Asp-1377, and Asp-1380. The tract at residues 1373–1417 is disordered; sequence KSSTDKWDSDENKDLANGKASDDEDEDDDDEPEEAEVEPSKEDVN. Basic and acidic residues predominate over residues 1374 to 1388; sequence SSTDKWDSDENKDLA. A compositionally biased stretch (acidic residues) spans 1394 to 1409; the sequence is DDEDEDDDDEPEEAEV. The RNase III 2 domain maps to 1609 to 1767; that stretch reads FLNFESKINY…LAGAIYMDSG (159 aa). Mg(2+) contacts are provided by Glu-1648, Asp-1753, and Glu-1756. The 66-residue stretch at 1792–1857 folds into the DRBM domain; it reads VPRSPVRELL…ARRALRSLKA (66 aa).

It belongs to the helicase family. Dicer subfamily. As to quaternary structure, component of the RISC loading complex (RLC), or micro-RNA (miRNA) loading complex (miRLC), which is composed of dicer1, ago2 and tarbp2; dicer1 and tarbp2 are required to process precursor miRNAs (pre-miRNAs) to mature miRNAs and then load them onto ago2. Note that the trimeric RLC/miRLC is also referred to as RISC. Requires Mg(2+) as cofactor. Mn(2+) serves as cofactor.

It localises to the cytoplasm. The enzyme catalyses Endonucleolytic cleavage to 5'-phosphomonoester.. Double-stranded RNA (dsRNA) endoribonuclease playing a central role in short dsRNA-mediated post-transcriptional gene silencing. Cleaves naturally occurring long dsRNAs and short hairpin pre-microRNAs (miRNA) into fragments of twenty-one to twenty-three nucleotides with 3' overhang of two nucleotides, producing respectively short interfering RNAs (siRNA) and mature microRNAs. SiRNAs and miRNAs serve as guide to direct the RNA-induced silencing complex (RISC) to complementary RNAs to degrade them or prevent their translation. Gene silencing mediated by siRNAs, also called RNA interference, controls the elimination of transcripts from mobile and repetitive DNA elements of the genome but also the degradation of exogenous RNA of viral origin for instance. The miRNA pathway on the other side is a mean to specifically regulate the expression of target genes. The chain is Endoribonuclease Dicer (dicer1) from Danio rerio (Zebrafish).